Consider the following 211-residue polypeptide: Thymidylate kinase (211 aa).

Residue 11–18 (GPDGAGKT) participates in ATP binding.

The protein belongs to the thymidylate kinase family.

It catalyses the reaction dTMP + ATP = dTDP + ADP. Functionally, phosphorylation of dTMP to form dTDP in both de novo and salvage pathways of dTTP synthesis. The sequence is that of Thymidylate kinase from Streptococcus pyogenes serotype M49 (strain NZ131).